Reading from the N-terminus, the 603-residue chain is Flavin-dependent halogenase chlA (603 aa).

Glycine 16, alanine 19, and glutamate 59 together coordinate FAD. 2 residues coordinate chloride: threonine 352 and glycine 353.

The protein belongs to the flavin-dependent halogenase family.

The catalysed reaction is 2,4,6-trihydroxyphenylhexan-1-one + FADH2 + chloride + O2 = (3-chloro-2,4,6-trihydroxyphenyl)hexan-1-one + FAD + 2 H2O + H(+). The enzyme catalyses (3-chloro-2,4,6-trihydroxyphenyl)hexan-1-one + FADH2 + chloride + O2 = (3,5-dichloro-2,4,6-trihydroxyphenyl)hexan-1-one + FAD + 2 H2O. Functionally, flavin-dependent halogenase; part of the gene cluster that mediates the biosynthesis of DIF-1 (Differentiation Inducing Factor-1), a signal molecule involved in the differentiation of pstO (prestalk-O) cells. The three-step process begins with the formation of (2,4,6-trihydroxyphenyl)-1-hexan-1-one (THPH) by the polyketide synthase StlB. THPH is then dichlorinated by the flavin-dependent halogenase ChlA. The last step of DIF-1 biosynthesis is the O-methylation of dichloro-THPH (or des-methyl-DIF-1) by the methyltransferase DmtA to yield DIF-1. In Dictyostelium discoideum (Social amoeba), this protein is Flavin-dependent halogenase chlA.